An 845-amino-acid polypeptide reads, in one-letter code: Protein kintoun (845 aa).

A compositionally biased stretch (basic and acidic residues) spans S362–V382. Disordered regions lie at residues S362–H420, Q575–D691, and A773–D845. Position 380 is a phosphoserine (S380). Residues P391 to L400 are compositionally biased toward acidic residues. The segment covering G584–Q593 has biased composition (basic and acidic residues). The segment covering K611 to K622 has biased composition (basic residues). Residues L640–G671 show a composition bias toward polar residues. A Phosphoserine modification is found at S779. Residues L794–C804 are compositionally biased toward polar residues.

This sequence belongs to the PIH1 family. Kintoun subfamily. In terms of assembly, interacts with Pp1alpha-96A, Pp1-87B, Pp1-13C and flw.

It localises to the cytoplasm. In terms of biological role, required for cytoplasmic pre-assembly of axonemal dyneins, thereby playing a central role in motility in cilia and flagella. Involved in pre-assembly of dynein arm complexes in the cytoplasm before intraflagellar transport loads them for the ciliary compartment. The chain is Protein kintoun from Drosophila erecta (Fruit fly).